The primary structure comprises 124 residues: Small ribosomal subunit protein uS12c (124 aa).

Residues 105-124 are disordered; the sequence is AGVKDRRQSRSKYGAKRPKA. Over residues 113–124 the composition is skewed to basic residues; that stretch reads SRSKYGAKRPKA.

The protein belongs to the universal ribosomal protein uS12 family. In terms of assembly, part of the 30S ribosomal subunit.

The protein resides in the plastid. It is found in the cyanelle. With S4 and S5 plays an important role in translational accuracy. Located at the interface of the 30S and 50S subunits. This Cyanophora paradoxa protein is Small ribosomal subunit protein uS12c (rps12).